The following is an 841-amino-acid chain: Axin-1 (841 aa).

The tract at residues 1 to 78 (MNIQGKGFPL…GYEPEGSASP (78 aa)) is disordered. A compositionally biased stretch (polar residues) spans 44–61 (FYSSKSDAVRNETSTATP). The 124-residue stretch at 88–211 (SLHSLLDDQD…LKSDIYLEYT (124 aa)) folds into the RGS domain. Residues 217–269 (SPKIYSDPSSGSGTGKGLPGYLPTLNEDEEWKCDQDTEPEASRDSAPSSRLTQ) form a disordered region. Over residues 248–259 (KCDQDTEPEASR) the composition is skewed to basic and acidic residues. Residues 348 to 433 (LRKQHRREMQ…DADISSGPSV (86 aa)) are interaction with GSK3B. Positions 434–508 (ISHKMPSAQP…RSPESGHLGK (75 aa)) are interaction with beta-catenin. 3 disordered regions span residues 482–527 (KTPG…TTKS), 613–635 (NIKK…SPED), and 727–756 (RRLE…SGAS). Residues 727–736 (RRLEEEEKRA) show a composition bias toward basic and acidic residues. The region spanning 759 to 841 (CENIVVAYYF…KIIGKVEKID (83 aa)) is the DIX domain.

In terms of assembly, homodimer. ADP-ribosylated by tankyrase TNKS and TNKS2. Poly-ADP-ribosylated protein is recognized by RNF146, followed by ubiquitination at 'Lys-48' and subsequent activation of the Wnt signaling pathway. Post-translationally, ubiquitinated by RNF146 when poly-ADP-ribosylated, leading to its degradation and subsequent activation of the Wnt signaling pathway.

Its subcellular location is the cytoplasm. It localises to the nucleus. The protein localises to the membrane. It is found in the cell membrane. In terms of biological role, component of the beta-catenin destruction complex required for regulating CTNNB1 levels through phosphorylation and ubiquitination, and modulating Wnt-signaling. Controls dorsoventral patterning via two opposing effects; down-regulates CTNNB1 to inhibit the Wnt signaling pathway and ventralize embryos, but also dorsalizes embryos by activating a Wnt-independent JNK signaling pathway. In Gallus gallus (Chicken), this protein is Axin-1 (AXIN1).